A 367-amino-acid chain; its full sequence is Phosphoribosylaminoimidazole-succinocarboxamide synthase (367 aa).

Belongs to the SAICAR synthetase family.

The catalysed reaction is 5-amino-1-(5-phospho-D-ribosyl)imidazole-4-carboxylate + L-aspartate + ATP = (2S)-2-[5-amino-1-(5-phospho-beta-D-ribosyl)imidazole-4-carboxamido]succinate + ADP + phosphate + 2 H(+). It functions in the pathway purine metabolism; IMP biosynthesis via de novo pathway; 5-amino-1-(5-phospho-D-ribosyl)imidazole-4-carboxamide from 5-amino-1-(5-phospho-D-ribosyl)imidazole-4-carboxylate: step 1/2. The protein is Phosphoribosylaminoimidazole-succinocarboxamide synthase of Aliivibrio salmonicida (strain LFI1238) (Vibrio salmonicida (strain LFI1238)).